A 78-amino-acid chain; its full sequence is Large ribosomal subunit protein uL29 (78 aa).

This sequence belongs to the universal ribosomal protein uL29 family.

This chain is Large ribosomal subunit protein uL29, found in Rippkaea orientalis (strain PCC 8801 / RF-1) (Cyanothece sp. (strain PCC 8801)).